A 293-amino-acid chain; its full sequence is Formamidopyrimidine-DNA glycosylase (293 aa).

P2 acts as the Schiff-base intermediate with DNA in catalysis. Residue E3 is the Proton donor of the active site. The active-site Proton donor; for beta-elimination activity is K58. DNA-binding residues include H104, R123, and K166. The FPG-type zinc-finger motif lies at 257-293; that stretch reads AAYDREGERCRTDGCGGAVKRFVQNGRSTFWCSGCQK. R283 serves as the catalytic Proton donor; for delta-elimination activity.

Belongs to the FPG family. As to quaternary structure, monomer. The cofactor is Zn(2+).

The enzyme catalyses Hydrolysis of DNA containing ring-opened 7-methylguanine residues, releasing 2,6-diamino-4-hydroxy-5-(N-methyl)formamidopyrimidine.. It catalyses the reaction 2'-deoxyribonucleotide-(2'-deoxyribose 5'-phosphate)-2'-deoxyribonucleotide-DNA = a 3'-end 2'-deoxyribonucleotide-(2,3-dehydro-2,3-deoxyribose 5'-phosphate)-DNA + a 5'-end 5'-phospho-2'-deoxyribonucleoside-DNA + H(+). Functionally, involved in base excision repair of DNA damaged by oxidation or by mutagenic agents. Acts as a DNA glycosylase that recognizes and removes damaged bases. Has a preference for oxidized purines, such as 7,8-dihydro-8-oxoguanine (8-oxoG). Has AP (apurinic/apyrimidinic) lyase activity and introduces nicks in the DNA strand. Cleaves the DNA backbone by beta-delta elimination to generate a single-strand break at the site of the removed base with both 3'- and 5'-phosphates. The protein is Formamidopyrimidine-DNA glycosylase of Rhodopseudomonas palustris (strain BisB5).